Here is a 328-residue protein sequence, read N- to C-terminus: GTPase Obg 2 (328 aa).

Positions 1–139 (MSFRREKFIE…HCVLLKLKIV (139 aa)) constitute an Obg domain. Positions 140–309 (SDVGIIGMPN…LHAQVKKAVV (170 aa)) constitute an OBG-type G domain. GTP contacts are provided by residues 146 to 153 (GMPNAGKS), 171 to 175 (FTTLE), 192 to 195 (DIPG), 259 to 262 (NKCD), and 290 to 292 (GDE). Mg(2+) is bound by residues serine 153 and threonine 173.

The protein belongs to the TRAFAC class OBG-HflX-like GTPase superfamily. OBG GTPase family. In terms of assembly, monomer. Requires Mg(2+) as cofactor.

It is found in the cytoplasm. Its function is as follows. An essential GTPase which binds GTP, GDP and possibly (p)ppGpp with moderate affinity, with high nucleotide exchange rates and a fairly low GTP hydrolysis rate. Plays a role in control of the cell cycle, stress response, ribosome biogenesis and in those bacteria that undergo differentiation, in morphogenesis control. The protein is GTPase Obg 2 of Anaplasma marginale (strain Florida).